The sequence spans 1072 residues: MPKRLDINTILVIGSGPIVIGQAAEFDYSGTQACQSLKEEGYKVILVNSNPATIMTDTATADKVYIEPLTLEFVSRIIRKERPDAILPTLGGQTGLNMAVELAKSGVLEECGVEILGTKLSAIEQAEDRDLFRTLMQELNEPTPPSEIIHNLDEAYGFVNEIGYPVIVRPAFTLGGTGGGICHNEEELIEIVTSGLKHSPVTQCLLEKSIAGCKEIEYEVMRDSNDNAIVVCNMENIDPVGVHTGDSIVVAPSQTLSDREYQMLRNTSLRIIRALGIEGGCNVQLALDPYSFQYYVIEVNPRVSRSSALASKATGYPIAKLAAKIAVGLTLDEIVNPVTQKTYACFEPALDYVVSKIPRWPFDKFESANRTLGTQMKATGEVMSIGRNLEESLLKAVRSLELGIYHLELDHLKELDKETMKKRIIKADDERLFIVAEAIRQGVTKEEINEWCEMDFFFLQKVENIVNMEREVKANVGNMEVLQTAKEMGFSDHYIAAAWNKTEREIYDMRKENNMTPVFKMVDTCAAEFESATPYYYSTYADENESIVTDRKSVVVLGSGPIRIGQGVEFDYATVHSVWAIKEAGYEAIIINNNPETVSTDFSISDKLYFEPLTIEDVMHIIDLEKPEGVIVQFGGQTAINLAAKLEEHGVKILGTSLEDLDRAEDRDKFEAALTKLGIPQPVGKTATTVEQAVAIAEEIGYPVLVRPSYVLGGRAMEIVYRQEELLHYMKNAVKVHADHPVLIDRYMVGKEIEVDAISDGENVFIPGIMEHIERAGVHSGDSIGVYPPQSLSEKLKEQIIEHTIALGKGLNIVGLLNIQFVVFKDQVYVIEVNPRASRTVPFLSKITGVPMANVATKVILGQDLVEQGYGTGYHPEEKEVYVKAPVFSFAKLRSVDTTLGPEMKSTGEVMGKDLTLEKALYKGLVASGINIPTHGSVIITVADKDKEEAMEIAKRFHEIGYNLLATAGTAQSLTEQNIPVQVVNKIDSEDYNLLDIIRQGKAQFVINTLTKGKQPARDGFRIRRESVENGVACLTSLDTTRAILRVLESMTFSAHSMKEITQTKRHEVVHA.

The segment at 1–401 (MPKRLDINTI…SLLKAVRSLE (401 aa)) is carboxyphosphate synthetic domain. Positions 129, 169, 175, 176, 208, 210, 215, 241, 242, 243, 284, and 298 each coordinate ATP. The region spanning 133–327 (RTLMQELNEP…IAKLAAKIAV (195 aa)) is the ATP-grasp 1 domain. Mg(2+) is bound by residues Gln-284, Glu-298, and Asn-300. Residues Gln-284, Glu-298, and Asn-300 each contribute to the Mn(2+) site. The interval 402–546 (LGIYHLELDH…YSTYADENES (145 aa)) is oligomerization domain. A carbamoyl phosphate synthetic domain region spans residues 547 to 929 (IVTDRKSVVV…ALYKGLVASG (383 aa)). The 191-residue stretch at 671–861 (EAALTKLGIP…MANVATKVIL (191 aa)) folds into the ATP-grasp 2 domain. ATP contacts are provided by Arg-707, Arg-746, Glu-752, Gly-777, Val-778, His-779, Ser-780, Gln-820, and Glu-832. Mg(2+)-binding residues include Gln-820, Glu-832, and Asn-834. Positions 820, 832, and 834 each coordinate Mn(2+). Residues 930–1072 (INIPTHGSVI…QTKRHEVVHA (143 aa)) form the MGS-like domain. Positions 930–1072 (INIPTHGSVI…QTKRHEVVHA (143 aa)) are allosteric domain.

This sequence belongs to the CarB family. In terms of assembly, composed of two chains; the small (or glutamine) chain promotes the hydrolysis of glutamine to ammonia, which is used by the large (or ammonia) chain to synthesize carbamoyl phosphate. Tetramer of heterodimers (alpha,beta)4. Mg(2+) serves as cofactor. It depends on Mn(2+) as a cofactor.

It catalyses the reaction hydrogencarbonate + L-glutamine + 2 ATP + H2O = carbamoyl phosphate + L-glutamate + 2 ADP + phosphate + 2 H(+). It carries out the reaction hydrogencarbonate + NH4(+) + 2 ATP = carbamoyl phosphate + 2 ADP + phosphate + 2 H(+). Its pathway is amino-acid biosynthesis; L-arginine biosynthesis; carbamoyl phosphate from bicarbonate: step 1/1. It functions in the pathway pyrimidine metabolism; UMP biosynthesis via de novo pathway; (S)-dihydroorotate from bicarbonate: step 1/3. Its function is as follows. Large subunit of the glutamine-dependent carbamoyl phosphate synthetase (CPSase). CPSase catalyzes the formation of carbamoyl phosphate from the ammonia moiety of glutamine, carbonate, and phosphate donated by ATP, constituting the first step of 2 biosynthetic pathways, one leading to arginine and/or urea and the other to pyrimidine nucleotides. The large subunit (synthetase) binds the substrates ammonia (free or transferred from glutamine from the small subunit), hydrogencarbonate and ATP and carries out an ATP-coupled ligase reaction, activating hydrogencarbonate by forming carboxy phosphate which reacts with ammonia to form carbamoyl phosphate. The protein is Carbamoyl phosphate synthase large chain of Bacillus cereus (strain AH820).